We begin with the raw amino-acid sequence, 632 residues long: tRNA uridine 5-carboxymethylaminomethyl modification enzyme MnmG (632 aa).

FAD is bound by residues 15–20 (GAGHAG), I127, and S182. 276 to 290 (GPRYCPSIEDKIVRF) contributes to the NAD(+) binding site. Q373 provides a ligand contact to FAD.

The protein belongs to the MnmG family. In terms of assembly, homodimer. Heterotetramer of two MnmE and two MnmG subunits. Requires FAD as cofactor.

The protein localises to the cytoplasm. In terms of biological role, NAD-binding protein involved in the addition of a carboxymethylaminomethyl (cmnm) group at the wobble position (U34) of certain tRNAs, forming tRNA-cmnm(5)s(2)U34. In Streptococcus pyogenes serotype M12 (strain MGAS2096), this protein is tRNA uridine 5-carboxymethylaminomethyl modification enzyme MnmG.